The primary structure comprises 71 residues: MSPIIINSVRLISSLLTIVFIMLPKVDTFSKIMKNKKILLNWQENISTLSIIKWISIILFLSSHCALFITL.

It localises to the plastid. It is found in the chloroplast. This is an uncharacterized protein from Mesostigma viride (Green alga).